A 1259-amino-acid polypeptide reads, in one-letter code: MSLWKKISLGVVIVILLLLGSVAFLVGTTSGLHLVFKAADRWVPGLDIGKVTGGWRDLTLSDVRYEQPGVAVKAGNLHLAVGLECLWNSSVCINDLALKDIQVNIDSKKMPPSEQVEEEEDSGPLDLSTPYPITLTRVALDNVNIKIDDTTVSVMDFTSGLNWQEKTLTLKPTSLKGLLIALPKVAEVAQEEVVEPKIENPQPDEKPLGETLKDLFSRPVLPEMTDVHLPLNLNIEEFKGEQLRVTGDTDITVSTMLLKVSSIDGNTKLDALDIDSSQGIVNASGTAQLSDNWPVDITLNSTLNVEPLKGEKVKLKMGGALREQLEIGVNLSGPVDMDLRAQTRLAEAGLPLNVEVNSKQLYWPFTGEKQYQADDLKLKLTGKMTDYTLSMRTAVKGQEIPPATITLDAKGNEQQVNLDKLTVAALEGKTELKALLDWQQAISWRGELTLNGINTAKEFPDWPSKLNGLIKTRGSLYGGTWQMDVPELKLTGNVKQNKVNVDGTLKGNSYMQWMIPGLHLELGPNSAEVKGELGVKDLNLDATINAPGLDNALPGLGGTAKGLVKVRGTVEAPQLLADITARGLRWQELSVAQVRVEGDIKSTDQIAGKLDVRVEQISQPDVNINLVTLNAKGSEKQHELQLRIQGEPVSGQLNLAGSFDRKEERWKGTLSNTRFQTPVGPWSLTRDIALDYRNKEQKISIGPHCWLNPNAELCVPQTIDAGAEGRAVVNLNRFDLAMLKPFMPETTQASGIFTGKADVAWDTTKEGLPQGSITLSGRNVQVTQTVNDAALPVAFQTLNLTAELRNNRAELGWTIRLTNNGQFDGQVQVTDPQGRRNLGGNVNIRNFNLAMINPIFTRGEKAAGMVSANLRLGGDVQSPQLFGQLQVTGVDIDGNFMPFDMQPSQLAVNFNGMRSTLAGTVRTQQGEIYLNGDADWSQIENWRARVTAKGSKVRITVPPMVRMDVSPDVVFEATPNLFTLDGRVDVPWARIVVHDLPESAVGVSSDVVMLNDNLQPEEPKTASIPINSNLIVHVGNNVRIDAFGLKARLTGDLNVVQDKQGLGLNGQINIPEGRFHAYGQDLIVRKGELLFSGPPDQPYLNIEAIRNPDATEDDVIAGVRVTGLADEPKAEIFSDPAMSQQAALSYLLRGQGLESDQSDSAAMTSMLIGLGVAQSGQIVGKIGETFGVSNLALDTQGVGDSSQVVVSGYVLPGLQVKYGVGIFDSIATLTLRYRLMPKLYLEAVSGVDQALDLLYQFEF.

Met1 is modified (N-formylmethionine). Topologically, residues 1–6 (MSLWKK) are cytoplasmic. Residues 7–27 (ISLGVVIVILLLLGSVAFLVG) form a helical; Signal-anchor for type II membrane protein membrane-spanning segment. The Periplasmic segment spans residues 28–1259 (TTSGLHLVFK…ALDLLYQFEF (1232 aa)).

The protein belongs to the TamB family. As to quaternary structure, interacts with TamA to form the translocation and assembly module (TAM).

Its subcellular location is the cell inner membrane. Component of the translocation and assembly module (TAM), which facilitates the insertion and assembly of specific beta-barrel proteins into the outer membrane. Promotes the assembly and secretion across the outer membrane of a subset of autotransporters, such as Ag43. Involved in the assembly of the outer membrane usher protein FimD. In vitro, when TAM is reconstituted into preformed liposomes, it can promote the assembly of several outer membrane proteins, including OmpA, EspP, Ag43 and FadL. TamA is sufficient to catalyze a low level of outer membrane protein (OMP) assembly, but both TamA and TamB are required for efficient OMP assembly. TamB may regulate TamA activity. It could regulate conformational changes in TamA to drive its function in OMP assembly. It could also act as a chaperone that facilitate the transport of nascent membrane proteins across the periplasm to TamA in the outer membrane. Functionally, in addition, is involved in outer membrane lipid homeostasis. Likely transports phospholipids between the inner membrane and the outer membrane. It would provide a bridge-like structure that protects phospholipids as they travel across the periplasm. One possible explanation for the apparent dual function of TAM is that TamB is a somewhat generic transporter of hydrophobic molecules. In terms of biological role, tamB, YdbH and YhdP are redundant, but not equivalent, in performing an essential function for growth and maintaining lipid homeostasis in the outer membrane. The transport functions of TamB and YhdP could be differentiated according to the fatty acid saturation state of the phospholipids, with TamB transporting more unsaturated phospholipids and YhdP more saturated phospholipids. Any of these three proteins is sufficient for growth. This is Translocation and assembly module subunit TamB from Escherichia coli (strain K12).